The primary structure comprises 320 residues: Cytochrome f (320 aa).

An N-terminal signal peptide occupies residues 1 to 35 (MQTRNAFSWLKKQITRSISVSLMIYILTRTSISSA). Residues tyrosine 36, cysteine 56, cysteine 59, and histidine 60 each contribute to the heme site. Residues 286 to 306 (AQGLLFFLASVILAQIFLVLK) traverse the membrane as a helical segment.

This sequence belongs to the cytochrome f family. In terms of assembly, the 4 large subunits of the cytochrome b6-f complex are cytochrome b6, subunit IV (17 kDa polypeptide, petD), cytochrome f and the Rieske protein, while the 4 small subunits are PetG, PetL, PetM and PetN. The complex functions as a dimer. It depends on heme as a cofactor.

The protein resides in the plastid. It localises to the chloroplast thylakoid membrane. Its function is as follows. Component of the cytochrome b6-f complex, which mediates electron transfer between photosystem II (PSII) and photosystem I (PSI), cyclic electron flow around PSI, and state transitions. The polypeptide is Cytochrome f (Nicotiana tomentosiformis (Tobacco)).